Reading from the N-terminus, the 234-residue chain is MLKTLVTDVDGTITDRRRRINTAAVETIRTLVDAGIEVVLASGNTVCFMDGLCKMVGTDGTIIGENGGVYRRGFSGTLRIPGDQEVCREAFKVLNDYFAGKGVELELYSAQYRFADVAFARNIDPDEARAIIRDHGLPVRVLDTGFAIHLQTPGVSKGTALVELAREMGLSPSEMMAVGDSENDIEMLEAAGIGVAVRNAPVRTLSAADWVSEEGYGDGFVEAVKKYYPYLFSR.

Catalysis depends on aspartate 8, which acts as the Nucleophile. Positions 8 and 10 each coordinate Mg(2+). Lysine 157 contacts substrate. Residues aspartate 180 and aspartate 184 each coordinate Mg(2+).

It belongs to the archaeal SPP-like hydrolase family. Mg(2+) is required as a cofactor.

The enzyme catalyses 2-phosphoglycolate + H2O = glycolate + phosphate. Functionally, catalyzes the dephosphorylation of 2-phosphoglycolate. The protein is Phosphoglycolate phosphatase of Methanoculleus marisnigri (strain ATCC 35101 / DSM 1498 / JR1).